Consider the following 89-residue polypeptide: Elongation factor 1-beta (89 aa).

This sequence belongs to the EF-1-beta/EF-1-delta family.

Its function is as follows. Promotes the exchange of GDP for GTP in EF-1-alpha/GDP, thus allowing the regeneration of EF-1-alpha/GTP that could then be used to form the ternary complex EF-1-alpha/GTP/AAtRNA. This chain is Elongation factor 1-beta, found in Methanocella arvoryzae (strain DSM 22066 / NBRC 105507 / MRE50).